We begin with the raw amino-acid sequence, 207 residues long: Small ribosomal subunit protein uS4 (207 aa).

The disordered stretch occupies residues 31 to 55; sequence KCKLDSKPGQHGRTSGARTSDYGTQ. Over residues 42–53 the composition is skewed to polar residues; sequence GRTSGARTSDYG. In terms of domain architecture, S4 RNA-binding spans 97–160; it reads SRLDNVVYRM…KKQARILEAL (64 aa).

It belongs to the universal ribosomal protein uS4 family. Part of the 30S ribosomal subunit. Contacts protein S5. The interaction surface between S4 and S5 is involved in control of translational fidelity.

Its function is as follows. One of the primary rRNA binding proteins, it binds directly to 16S rRNA where it nucleates assembly of the body of the 30S subunit. With S5 and S12 plays an important role in translational accuracy. This chain is Small ribosomal subunit protein uS4, found in Paraburkholderia phymatum (strain DSM 17167 / CIP 108236 / LMG 21445 / STM815) (Burkholderia phymatum).